The primary structure comprises 115 residues: Large ribosomal subunit protein uL18 (115 aa).

The protein belongs to the universal ribosomal protein uL18 family. As to quaternary structure, part of the 50S ribosomal subunit; part of the 5S rRNA/L5/L18/L25 subcomplex. Contacts the 5S and 23S rRNAs.

Functionally, this is one of the proteins that bind and probably mediate the attachment of the 5S RNA into the large ribosomal subunit, where it forms part of the central protuberance. The sequence is that of Large ribosomal subunit protein uL18 from Mycoplasma genitalium (strain ATCC 33530 / DSM 19775 / NCTC 10195 / G37) (Mycoplasmoides genitalium).